A 500-amino-acid chain; its full sequence is NAD(P)H-quinone oxidoreductase chain 4, chloroplastic (500 aa).

14 helical membrane passes run 4–24, 35–55, 87–107, 113–130, 134–154, 167–187, 211–231, 242–262, 272–292, 305–325, 330–350, 386–406, 416–436, and 462–482; these read FPWL…MLFL, YTIC…CYNF, IGTI…AFPV, LFHF…GSFS, LLLF…LLSM, FILY…GISL, ILFY…IPLH, HYST…YGLV, AHSM…IYAA, IAYS…SITD, GAIL…FLAG, LALP…GIIT, ILII…LLSM, and LFLS…PDFV.

It belongs to the complex I subunit 4 family.

The protein resides in the plastid. It localises to the chloroplast thylakoid membrane. It catalyses the reaction a plastoquinone + NADH + (n+1) H(+)(in) = a plastoquinol + NAD(+) + n H(+)(out). The catalysed reaction is a plastoquinone + NADPH + (n+1) H(+)(in) = a plastoquinol + NADP(+) + n H(+)(out). This is NAD(P)H-quinone oxidoreductase chain 4, chloroplastic from Nasturtium officinale (Watercress).